We begin with the raw amino-acid sequence, 113 residues long: UPF0342 protein MGAS2096_Spy0691 (113 aa).

The protein belongs to the UPF0342 family.

In Streptococcus pyogenes serotype M12 (strain MGAS2096), this protein is UPF0342 protein MGAS2096_Spy0691.